The following is a 478-amino-acid chain: Protein MAINTENANCE OF MERISTEMS (478 aa).

The segment at 459–478 (ASTTNKRKRREEQQQTDWSE) is disordered. Positions 464-468 (KRKRR) match the Nuclear localization signal motif.

Expressed in root meristem, root vasculature, shoot apical meristem (SAM), leaf vasculature and ovules.

It is found in the nucleus. Its function is as follows. Required for the organization of the root apical meristem (RAM) and the shoot apical meristem (SAM). Required to maintain genome stability and cell division activity in meristematic cells. This chain is Protein MAINTENANCE OF MERISTEMS, found in Arabidopsis thaliana (Mouse-ear cress).